Reading from the N-terminus, the 102-residue chain is Small ribosomal subunit protein uS10 (102 aa).

The protein belongs to the universal ribosomal protein uS10 family. In terms of assembly, part of the 30S ribosomal subunit.

Its function is as follows. Involved in the binding of tRNA to the ribosomes. In Exiguobacterium sp. (strain ATCC BAA-1283 / AT1b), this protein is Small ribosomal subunit protein uS10.